A 302-amino-acid chain; its full sequence is Sulfate adenylyltransferase subunit 2 (302 aa).

Residues 280–302 (RQGRAIDHDQSGSMELKKRQGYF) are disordered.

The protein belongs to the PAPS reductase family. CysD subfamily. Heterodimer composed of CysD, the smaller subunit, and CysN.

The catalysed reaction is sulfate + ATP + H(+) = adenosine 5'-phosphosulfate + diphosphate. The protein operates within sulfur metabolism; hydrogen sulfide biosynthesis; sulfite from sulfate: step 1/3. Functionally, with CysN forms the ATP sulfurylase (ATPS) that catalyzes the adenylation of sulfate producing adenosine 5'-phosphosulfate (APS) and diphosphate, the first enzymatic step in sulfur assimilation pathway. APS synthesis involves the formation of a high-energy phosphoric-sulfuric acid anhydride bond driven by GTP hydrolysis by CysN coupled to ATP hydrolysis by CysD. The sequence is that of Sulfate adenylyltransferase subunit 2 from Vibrio cholerae serotype O1 (strain ATCC 39315 / El Tor Inaba N16961).